We begin with the raw amino-acid sequence, 1161 residues long: Mitogen-activated protein kinase kinase kinase (1161 aa).

Residues 56-120 (GDGSLWTALY…PKDFVTDEDP (65 aa)) enclose the SH3 domain. One can recognise a Protein kinase domain in the interval 142 to 402 (LDIKEVIGSG…KEILKQLESI (261 aa)). Residues 148 to 156 (IGSGGFCKV) and Lys-169 contribute to the ATP site. Asp-264 serves as the catalytic Proton acceptor. The residue at position 300 (Thr-300) is a Phosphothreonine; by autocatalysis. Position 304 is a phosphoserine; by autocatalysis (Ser-304). Leucine-zipper regions lie at residues 426–447 (IAGV…EEQL) and 461–482 (LKIR…ELVM). Ser-525 and Ser-560 each carry phosphoserine. Disordered regions lie at residues 560 to 615 (SQLS…GSGG) and 658 to 678 (TTNN…NQLN). Polar residues predominate over residues 571-583 (AQTSTHSSFSKSA). A compositionally biased stretch (low complexity) spans 591–601 (QQQNQQQVASL). Phosphoserine occurs at positions 685, 773, and 792. The segment at 790–830 (GNSPAVGRKKHSLDSSSHHPPANGSNSFALPNQLTLPSEDN) is disordered. The segment covering 812–830 (NGSNSFALPNQLTLPSEDN) has biased composition (polar residues). Thr-862 is modified (phosphothreonine). Disordered regions lie at residues 988–1014 (RSAS…EAVN), 1045–1093 (EQRQ…SAGS), and 1137–1161 (GGSS…LERC). The segment covering 989–1010 (SASPSLSSSSTTASASPSIAST) has biased composition (low complexity). Phosphoserine is present on Ser-993. The segment covering 1052 to 1063 (NQKKQRPKHITK) has biased composition (basic residues). Basic and acidic residues predominate over residues 1073 to 1086 (GQHHEHDDHNDPQH). A compositionally biased stretch (polar residues) spans 1150-1161 (PQTQSCEQLERC).

It belongs to the protein kinase superfamily. STE Ser/Thr protein kinase family. MAP kinase kinase kinase subfamily. As to quaternary structure, homodimer. Requires Mg(2+) as cofactor. Post-translationally, autophosphorylation on serine and threonine residues within the activation loop plays a role in enzyme activation. As to expression, expressed both maternally and zygotically. Expressed uniformly in large quantities in the early embryo (stages 1-4). In the late embryo, expression is ubiquitous, but expression levels are dramatically reduced. Expressed in the adult head and thorax, and in S2 cells.

The catalysed reaction is L-seryl-[protein] + ATP = O-phospho-L-seryl-[protein] + ADP + H(+). It catalyses the reaction L-threonyl-[protein] + ATP = O-phospho-L-threonyl-[protein] + ADP + H(+). With respect to regulation, homodimerization via the leucine zipper domains is required for autophosphorylation and subsequent activation. Activated by C6-ceramide. Activates the JUN N-terminal pathway during dorsal closure. The chain is Mitogen-activated protein kinase kinase kinase from Drosophila melanogaster (Fruit fly).